Reading from the N-terminus, the 84-residue chain is Small ribosomal subunit protein bS18B (84 aa).

This sequence belongs to the bacterial ribosomal protein bS18 family. Part of the 30S ribosomal subunit. Forms a tight heterodimer with protein bS6.

Functionally, binds as a heterodimer with protein bS6 to the central domain of the 16S rRNA, where it helps stabilize the platform of the 30S subunit. This chain is Small ribosomal subunit protein bS18B, found in Mycolicibacterium smegmatis (strain ATCC 700084 / mc(2)155) (Mycobacterium smegmatis).